We begin with the raw amino-acid sequence, 252 residues long: Cell division protein ZapD (252 aa).

It belongs to the ZapD family. As to quaternary structure, interacts with FtsZ.

It localises to the cytoplasm. Cell division factor that enhances FtsZ-ring assembly. Directly interacts with FtsZ and promotes bundling of FtsZ protofilaments, with a reduction in FtsZ GTPase activity. This Dechloromonas aromatica (strain RCB) protein is Cell division protein ZapD.